A 968-amino-acid polypeptide reads, in one-letter code: Pumilio homolog 1 (968 aa).

Disordered stretches follow at residues 1–25 (MIPE…DYEK) and 138–171 (NNVL…TGAS). A Phosphoserine modification is found at serine 194. 3 disordered regions span residues 204-240 (GHGH…SQGI), 260-303 (GTPD…VTSG), and 360-382 (KSDQ…PHGS). Polar residues-rich tracts occupy residues 211–220 (QQPSRPASRN) and 227–238 (DSNNNLSPSASQ). Threonine 261 bears the Phosphothreonine mark. Positions 291 to 303 (TSNQSPFNGVTSG) are enriched in polar residues. The PUM-HD domain occupies 610–950 (FGSSMLEEFK…HVVARIEKLV (341 aa)). Pumilio repeat units lie at residues 630-665 (EIAG…MVYE), 666-701 (EIMP…ELAE), 702-737 (KLFD…KMVK), 738-773 (ELDG…FIIS), 774-810 (TFFG…KVME), 811-846 (EILS…VIIK), 847-882 (ELAG…LLVN), and 883-924 (EMLG…LILT).

The protein resides in the cytoplasm. In terms of biological role, sequence-specific RNA-binding protein that regulates translation and mRNA stability by binding the 3'-UTR of target mRNAs. Binds the APUM-binding elements (APBEs) in the 3'-UTR mRNA sequence of CLV1, PNH, WUS and FAS2. In Arabidopsis thaliana (Mouse-ear cress), this protein is Pumilio homolog 1 (APUM1).